The chain runs to 156 residues: Fibroblast growth factor 2 (156 aa).

Positions 1 to 9 are excised as a propeptide; that stretch reads MAAGSITTL. Asn37 is a binding site for heparin. Tyr83 carries the phosphotyrosine; by TEC modification. Residue Lys96 forms a Glycyl lysine isopeptide (Lys-Gly) (interchain with G-Cter in SUMO1) linkage. Positions 129–145 are heparin-binding; it reads KRTGQYKLGSKTGPGQK.

This sequence belongs to the heparin-binding growth factors family. In terms of assembly, monomer. Homodimer. Interacts with FGFR1, FGFR2, FGFR3 and FGFR4. Affinity between fibroblast growth factors (FGFs) and their receptors is increased by heparan sulfate glycosaminoglycans that function as coreceptors. Interacts with CSPG4, FGFBP1 and TEC. Found in a complex with FGFBP1, FGF1 and FGF2. Interacts with FGFBP3. Interacts with integrin ITGAV:ITGB3; the interaction is required for FGF2 signaling. Interacts with SNORC (via the extracellular domain). Interacts with glypican GPC3. In terms of processing, phosphorylation at Tyr-83 regulates FGF2 unconventional secretion.

Its subcellular location is the secreted. The protein resides in the nucleus. Functionally, acts as a ligand for FGFR1, FGFR2, FGFR3 and FGFR4. Also acts as an integrin ligand which is required for FGF2 signaling. Binds to integrin ITGAV:ITGB3. Plays an important role in the regulation of cell survival, cell division, cell differentiation and cell migration. Functions as a potent mitogen in vitro. Can induce angiogenesis. Mediates phosphorylation of ERK1/2 and thereby promotes retinal lens fiber differentiation. The polypeptide is Fibroblast growth factor 2 (FGF2) (Monodelphis domestica (Gray short-tailed opossum)).